Here is a 282-residue protein sequence, read N- to C-terminus: Putative hydrolase Bcen_5340 (282 aa).

The Mg(2+) site is built by Glu124, Glu126, and Asp155.

The protein belongs to the FAH family. Mg(2+) is required as a cofactor.

In Burkholderia orbicola (strain AU 1054), this protein is Putative hydrolase Bcen_5340.